A 526-amino-acid polypeptide reads, in one-letter code: Na(+)/H(+) antiporter NhaB (526 aa).

Helical transmembrane passes span 13-33 (FLGQSPDWYKLAILVFLVVNP), 98-118 (LLLIFMVAGIYFMKQLLLFVF), 133-155 (LAFCFAAALLSAFLDALTVVAVV), 208-228 (LLMHAGVGTALGGVMTMVGEP), 244-264 (FFLRMAPVTLPVFACGLLVCL), 309-329 (ALIGIWLVVALAFHLAEVGLI), 355-375 (EALPFTALLTVFFTVVAVIIE), 395-415 (LALFYLFNGLLSSVSDNVFVG), 452-472 (VATPNGQAAFLFLLTSALAPL), and 481-501 (VWMALPYTVVLTLVGLLCVQF).

Belongs to the NhaB Na(+)/H(+) (TC 2.A.34) antiporter family.

It is found in the cell inner membrane. The enzyme catalyses 2 Na(+)(in) + 3 H(+)(out) = 2 Na(+)(out) + 3 H(+)(in). In terms of biological role, na(+)/H(+) antiporter that extrudes sodium in exchange for external protons. The sequence is that of Na(+)/H(+) antiporter NhaB from Serratia proteamaculans (strain 568).